Reading from the N-terminus, the 257-residue chain is tRNA pseudouridine synthase A (257 aa).

The active-site Nucleophile is the Asp-53. Tyr-111 serves as a coordination point for substrate.

It belongs to the tRNA pseudouridine synthase TruA family. As to quaternary structure, homodimer.

It carries out the reaction uridine(38/39/40) in tRNA = pseudouridine(38/39/40) in tRNA. In terms of biological role, formation of pseudouridine at positions 38, 39 and 40 in the anticodon stem and loop of transfer RNAs. The chain is tRNA pseudouridine synthase A from Xanthomonas campestris pv. campestris (strain 8004).